The chain runs to 215 residues: Probable transaldolase (215 aa).

Catalysis depends on Lys-83, which acts as the Schiff-base intermediate with substrate.

Belongs to the transaldolase family. Type 3B subfamily.

It is found in the cytoplasm. The enzyme catalyses D-sedoheptulose 7-phosphate + D-glyceraldehyde 3-phosphate = D-erythrose 4-phosphate + beta-D-fructose 6-phosphate. It functions in the pathway carbohydrate degradation; pentose phosphate pathway; D-glyceraldehyde 3-phosphate and beta-D-fructose 6-phosphate from D-ribose 5-phosphate and D-xylulose 5-phosphate (non-oxidative stage): step 2/3. Its function is as follows. Transaldolase is important for the balance of metabolites in the pentose-phosphate pathway. The sequence is that of Probable transaldolase from Pelotomaculum thermopropionicum (strain DSM 13744 / JCM 10971 / SI).